The primary structure comprises 173 residues: Ribosome maturation factor RimM (173 aa).

Residues 92 to 165 (EDEYYHTDLI…RVVVALPQEI (74 aa)) form the PRC barrel domain.

The protein belongs to the RimM family. Binds ribosomal protein uS19.

Its subcellular location is the cytoplasm. Functionally, an accessory protein needed during the final step in the assembly of 30S ribosomal subunit, possibly for assembly of the head region. Essential for efficient processing of 16S rRNA. May be needed both before and after RbfA during the maturation of 16S rRNA. It has affinity for free ribosomal 30S subunits but not for 70S ribosomes. The polypeptide is Ribosome maturation factor RimM (Bradyrhizobium diazoefficiens (strain JCM 10833 / BCRC 13528 / IAM 13628 / NBRC 14792 / USDA 110)).